Here is a 237-residue protein sequence, read N- to C-terminus: LexA repressor (237 aa).

The segment at residues 26–46 (FDEMKDALDLRSKSGIHRLIT) is a DNA-binding region (H-T-H motif). Residues Ser-158 and Lys-196 each act as for autocatalytic cleavage activity in the active site.

The protein belongs to the peptidase S24 family. In terms of assembly, homodimer.

It catalyses the reaction Hydrolysis of Ala-|-Gly bond in repressor LexA.. In terms of biological role, represses a number of genes involved in the response to DNA damage (SOS response), including recA and lexA. In the presence of single-stranded DNA, RecA interacts with LexA causing an autocatalytic cleavage which disrupts the DNA-binding part of LexA, leading to derepression of the SOS regulon and eventually DNA repair. The sequence is that of LexA repressor from Rhodopseudomonas palustris (strain BisA53).